The sequence spans 442 residues: Exodeoxyribonuclease 7 large subunit (442 aa).

It belongs to the XseA family. Heterooligomer composed of large and small subunits.

The protein localises to the cytoplasm. The enzyme catalyses Exonucleolytic cleavage in either 5'- to 3'- or 3'- to 5'-direction to yield nucleoside 5'-phosphates.. Functionally, bidirectionally degrades single-stranded DNA into large acid-insoluble oligonucleotides, which are then degraded further into small acid-soluble oligonucleotides. The polypeptide is Exodeoxyribonuclease 7 large subunit (Rickettsia bellii (strain OSU 85-389)).